The sequence spans 405 residues: MGCTRGWRLLLLLGLVCVGALQGRGQEESREVSLQYNPGSSDTSVNVVHVRAVGNGSTIHYVWSTIGTPTVLLIFTHSETSQLQVNWTKLLSPAPQGALRIEPAESVSYATALLFTRIFEYQDVNNTANFSGTDEKYFYPAYNLSDFLWDSANATINATSLSANLTGYNASDPTDSFHNGSVSFRISAYSSSGRDSSSPRLRHTANCTKLEFLVAGVRPRGNNSRFALEMVTIEKEGRKKMESVHSIDDEYTPTIFEMMQLVPDAPNSSHARGFLQWKSVAYGSPSGTRADILPCQLHPLRPFNTTFPAGSIAHAYFGDDLADAYKLEAFNISFGIADGDFYDKNRFLSWSALIGYGEPPRDSFSILVICIMAVALGTPLLLLIVGTLVVTALRHKVYSNYEPIN.

An N-terminal signal peptide occupies residues 1–25 (MGCTRGWRLLLLLGLVCVGALQGRG). Over 26–365 (QEESREVSLQ…YGEPPRDSFS (340 aa)) the chain is Lumenal. N-linked (GlcNAc...) asparagine glycosylation is found at Asn-55, Asn-86, Asn-125, Asn-129, Asn-143, Asn-153, Asn-157, Asn-164, Asn-169, Asn-179, Asn-206, Asn-222, Asn-267, Asn-304, and Asn-331. The helical transmembrane segment at 366–386 (ILVICIMAVALGTPLLLLIVG) threads the bilayer. The Cytoplasmic segment spans residues 387 to 405 (TLVVTALRHKVYSNYEPIN). The short motif at 401–405 (YEPIN) is the Lysosomal targeting motif element.

This sequence belongs to the GLMP family. In terms of assembly, interacts (via lumenal domain) with lysosomal protein MFSD1; the interaction starts while both proteins are still in the endoplasmic reticulum and is required for stabilization of MFSD1 in lysosomes but has no direct effect on its targeting to lysosomes or transporter activity.

Its subcellular location is the lysosome membrane. In terms of biological role, required to protect lysosomal transporter MFSD1 from lysosomal proteolysis and for MFSD1 lysosomal localization. The polypeptide is Glycosylated lysosomal membrane protein A (glmp-a) (Xenopus laevis (African clawed frog)).